Reading from the N-terminus, the 815-residue chain is DNA topoisomerase 1 (815 aa).

The region spanning 3–119 (KHLLIVESPA…QRIVFTEITP (117 aa)) is the Toprim domain. Mg(2+)-binding residues include Glu-9 and Asp-82. A Topo IA-type catalytic domain is found at 133 to 573 (ASDLVDAQQA…KFWVPFKELV (441 aa)). The interval 167–172 (SAGRVQ) is interaction with DNA. Tyr-308 (O-(5'-phospho-DNA)-tyrosine intermediate) is an active-site residue. Positions 759–815 (TGKPARKNFSTKKTATKNETRKQTTKKRTTDAKATKKVSDKPVKKQIKKRIAPNITQ) are disordered. The span at 774 to 801 (TKNETRKQTTKKRTTDAKATKKVSDKPV) shows a compositional bias: basic and acidic residues.

This sequence belongs to the type IA topoisomerase family. As to quaternary structure, monomer. Mg(2+) is required as a cofactor.

It catalyses the reaction ATP-independent breakage of single-stranded DNA, followed by passage and rejoining.. Releases the supercoiling and torsional tension of DNA, which is introduced during the DNA replication and transcription, by transiently cleaving and rejoining one strand of the DNA duplex. Introduces a single-strand break via transesterification at a target site in duplex DNA. The scissile phosphodiester is attacked by the catalytic tyrosine of the enzyme, resulting in the formation of a DNA-(5'-phosphotyrosyl)-enzyme intermediate and the expulsion of a 3'-OH DNA strand. The free DNA strand then undergoes passage around the unbroken strand, thus removing DNA supercoils. Finally, in the religation step, the DNA 3'-OH attacks the covalent intermediate to expel the active-site tyrosine and restore the DNA phosphodiester backbone. In Xylella fastidiosa (strain Temecula1 / ATCC 700964), this protein is DNA topoisomerase 1.